The chain runs to 177 residues: Large ribosomal subunit protein uL6 (177 aa).

The protein belongs to the universal ribosomal protein uL6 family. As to quaternary structure, part of the 50S ribosomal subunit.

In terms of biological role, this protein binds to the 23S rRNA, and is important in its secondary structure. It is located near the subunit interface in the base of the L7/L12 stalk, and near the tRNA binding site of the peptidyltransferase center. The protein is Large ribosomal subunit protein uL6 of Pseudomonas fluorescens (strain Pf0-1).